Here is an 886-residue protein sequence, read N- to C-terminus: Leucine--tRNA ligase (886 aa).

The 'HIGH' region motif lies at Pro-51 to His-61. The short motif at Lys-644 to Ser-648 is the 'KMSKS' region element. An ATP-binding site is contributed by Lys-647.

It belongs to the class-I aminoacyl-tRNA synthetase family.

Its subcellular location is the cytoplasm. The catalysed reaction is tRNA(Leu) + L-leucine + ATP = L-leucyl-tRNA(Leu) + AMP + diphosphate. The polypeptide is Leucine--tRNA ligase (Bartonella tribocorum (strain CIP 105476 / IBS 506)).